Here is a 612-residue protein sequence, read N- to C-terminus: Cryptochrome-2 (612 aa).

The CNT2, binds chromophores to sense blue light and mediate CRY dimerization stretch occupies residues 1 to 485 (MKMDKKTIVW…TARELLAKAI (485 aa)). The Photolyase/cryptochrome alpha/beta domain occupies 5–134 (KKTIVWFRRD…SVQSYNGDLL (130 aa)). Residue tyrosine 232 coordinates FAD. The Mg(2+) site is built by asparagine 235 and serine 243. 244–248 (TSLLS) contributes to the FAD binding site. Histidine 355 serves as a coordination point for Mg(2+). Residues asparagine 356 and 387 to 389 (DAD) each bind FAD. Residue 356–357 (NR) participates in ATP binding. Aspartate 406 provides a ligand contact to ATP. The interval 486–612 (SRTREAQIMI…TTSLGKNGCK (127 aa)) is CCT2/CCE2, mediates blue light signaling. Residues 539-576 (GSKRVKPEEEEERDMKKSRGFDERELFSTAESSSSSSV) form a disordered region. The short motif at 541-555 (KRVKPEEEEERDMKK) is the Nuclear localization signal element. Basic and acidic residues predominate over residues 551 to 564 (RDMKKSRGFDEREL). Residue serine 587 is modified to Phosphoserine; by CK1. A disordered region spans residues 590–612 (KNLEGIQDSSDQITTSLGKNGCK). The span at 596-612 (QDSSDQITTSLGKNGCK) shows a compositional bias: polar residues. Phosphoserine occurs at positions 598 and 599. Threonine 603 carries the post-translational modification Phosphothreonine; by CK1. Serine 605 is subject to Phosphoserine.

It belongs to the DNA photolyase class-1 family. Homodimer. Blue-light dependent dimerization. Interacts with COP1 and PHYB in the nucleus. Binds reversibly to CIBs proteins such as BHLH63/CIB1, BHLH78/CIB2, BHLH74/CIB4 and BHLH76/CIB5 after blue light illumination to stimulate their transcription factor activities. Interacts with PIF4 and PIF5 in the nucleus in response to low blue light (LBL). Binds to SPA1 in response to blue light, this interaction prevents SPA1/COP1 complex formation but stimulates interaction with COP1, and thus avoid COP1-dependent degradation of the transcription factors CO and HY5 by the proteasome and promotes hypocotyl elongation and floral initiation. Binding to ATP mediates conformational changes which facilitate flavin binding. Interacts with BIC1 in both darkness and light. Interacts with NRP. Requires FAD as cofactor. (6R)-5,10-methylene-5,6,7,8-tetrahydrofolate serves as cofactor. In terms of processing, phosphorylated by CK1.3 and CK1.4; in response to blue light. Required for degradation. Adopts an open conformation when phosphorylated upon photoexcitation and thus interacts with signaling partner proteins. Not autophosphorylated, even in complex with FAD cofactor. Post-translationally, ubiquitinated; in response to blue light. As to expression, mostly expressed in the shoot meristems and root tips, and, to a lower extent, in the cotyledons, hypocotyls, and roots.

Its subcellular location is the nucleus. It localises to the PML body. It is found in the cytoplasm. Its function is as follows. Photoreceptor that mediates primarily blue light inhibition of hypocotyl elongation and photoperiodic control of floral initiation, and regulates other light responses, including circadian rhythms, tropic growth, stomata opening, guard cell development, root development, bacterial and viral pathogen responses, abiotic stress responses, cell cycles, programmed cell death, apical dominance, fruit and ovule development, seed dormancy, and magnetoreception. Photoexcited cryptochromes interact with signaling partner proteins to alter gene expression at both transcriptional and post-translational levels and, consequently, regulate the corresponding metabolic and developmental programs. Blue-light absorbing flavoprotein that activates reversible flavin photoreduction via an electron transport chain comprising a tryptophan triad (W-321, W-374 and W-397), or via an alternative electron transport that involves small metabolites, including NADPH, NADH, and ATP. The half-life of the activated signaling state is about 16 minutes. Perceives low blue light (LBL) and responds by directly contacting two bHLH transcription factors, PIF4 and PIF5, at chromatin on E-box variant 5'-CA[CT]GTG-3' to promote their activity and stimulate specific gene expression to adapt global physiology (e.g. hypocotyl elongation and hyponastic growth in low blue light). In response to blue light, binds to CIB proteins (e.g. BHLH63/CIB1 and BHLH76/CIB5) to activate transcription and floral initiation. Mediates blue light-induced gene expression, floral initiation and hypocotyl elongation through the interaction with SPA1 that prevents formation of SPA1/COP1 complex but stimulates COP1 binding, and thus inhibits COP1-mediated degradation of transcription factors (e.g. CO and HY5). Promotes flowering time in continuous light (LL). Involved in shortening the circadian clock period, especially at 27 degrees Celsius, in blue light (BL). Required to maintain clock genes expression rhythm. Triggers nuclear accumulation of ROS in response to blue light illumination. Involved in blue light-dependent stomatal opening, transpiration and inhibition of stem and root growth, probably by regulating abscisic acid (ABA). Regulates the timing of flowering by promoting the expression of 'FLOWERING LOCUS T' (FT) in vascular bundles. Negatively regulated by 'FLOWERING LOCUS C' (FLC). General positive regulator of reversible low light-induced chromatin decompaction. Involved in triggering chromatin decondensation during floral transition. Together with phototropins, involved in phototropism regulation by various blue light fluence; blue light attenuates phototropism in high fluence rates (100 umol.m-2.s-1) but enhances phototropism in low fluence rates (&lt;1.0 umol.m-2.s-1). The effect of near-null magnetic field on flowering is altered by changes of blue light cycle and intensity in a CRY1/CRY2-dependent manner. Involved in the strigolactone signaling that regulates hypocotyl growth in response to blue light. Confers resistance to turnip crinkle virus (TCV) by preventing COP1-mediated proteasome-mediated degradation of RPP8/HRT, thus promoting its stability in light. Exposure to darkness or blue-light induces degradation of CRY2, and in turn of RPP8/HRT, resulting in susceptibility to TCV. This is Cryptochrome-2 from Arabidopsis thaliana (Mouse-ear cress).